Consider the following 745-residue polypeptide: 5-methyltetrahydropteroyltriglutamate--homocysteine methyltransferase (745 aa).

Residues 19–22 and lysine 119 each bind 5-methyltetrahydropteroyltri-L-glutamate; that span reads RELK. L-homocysteine is bound by residues 418 to 420 and glutamate 471; that span reads IGS. L-methionine-binding positions include 418-420 and glutamate 471; that span reads IGS. 5-methyltetrahydropteroyltri-L-glutamate is bound by residues 502–503 and tryptophan 548; that span reads RC. Position 586 (aspartate 586) interacts with L-homocysteine. Aspartate 586 is a binding site for L-methionine. Glutamate 592 serves as a coordination point for 5-methyltetrahydropteroyltri-L-glutamate. Histidine 628, cysteine 630, and glutamate 652 together coordinate Zn(2+). Histidine 681 serves as the catalytic Proton donor. Cysteine 713 lines the Zn(2+) pocket.

It belongs to the vitamin-B12 independent methionine synthase family. Zn(2+) is required as a cofactor.

It carries out the reaction 5-methyltetrahydropteroyltri-L-glutamate + L-homocysteine = tetrahydropteroyltri-L-glutamate + L-methionine. The protein operates within amino-acid biosynthesis; L-methionine biosynthesis via de novo pathway; L-methionine from L-homocysteine (MetE route): step 1/1. In terms of biological role, catalyzes the transfer of a methyl group from 5-methyltetrahydrofolate to homocysteine resulting in methionine formation. The sequence is that of 5-methyltetrahydropteroyltriglutamate--homocysteine methyltransferase from Corynebacterium glutamicum (strain ATCC 13032 / DSM 20300 / JCM 1318 / BCRC 11384 / CCUG 27702 / LMG 3730 / NBRC 12168 / NCIMB 10025 / NRRL B-2784 / 534).